The sequence spans 595 residues: P2X purinoceptor 7 (595 aa).

Residues 1–22 (MPACCSWNDVLQYETNKVTRIQ) are Cytoplasmic-facing. Cys-4 carries S-palmitoyl cysteine lipidation. Residues 23-46 (STNYGTVKWVLHMIVFSYISFALV) traverse the membrane as a helical segment. At 47–328 (SDKLYQRKEP…ILVFGTGGKF (282 aa)) the chain is on the extracellular side. Asn-74 carries an N-linked (GlcNAc...) asparagine glycan. Cystine bridges form between Cys-119/Cys-168, Cys-129/Cys-152, and Cys-135/Cys-162. Residues Arg-125 and Arg-133 each carry the ADP-ribosylarginine; by ART2B modification. A glycan (N-linked (GlcNAc...) asparagine) is linked at Asn-187. Thr-189 provides a ligand contact to ATP. Residues Asn-202 and Asn-213 are each glycosylated (N-linked (GlcNAc...) asparagine). Cys-216 and Cys-226 are disulfide-bonded. N-linked (GlcNAc...) asparagine glycosylation is present at Asn-241. A disulfide bridge links Cys-260 with Cys-269. Residues Arg-294 and Lys-311 each coordinate ATP. The chain crosses the membrane as a helical span at residues 329–353 (DIIQLVVYIGSTLSYFGLATVCIDL). Position 342 (Ser-342) interacts with Na(+). At 354–595 (LINTYSSAFC…GQYSGFKYPY (242 aa)) the chain is on the cytoplasmic side. The C-cys anchor stretch occupies residues 360–377 (SAFCRSGVYPYCKCCEPC). S-palmitoyl cysteine attachment occurs at residues Cys-363, Cys-374, and Cys-377. Ser-390 is subject to Phosphoserine. The interval 395-595 (KPTLKYVSFV…GQYSGFKYPY (201 aa)) is cytoplasmic ballast. Residues Cys-479, Cys-499, and Cys-506 each contribute to the Zn(2+) site. The GTP site is built by Arg-546, His-547, Tyr-550, and Ala-567. Cys-572 contacts Zn(2+). GTP is bound by residues Lys-583, Ser-589, and Gly-590.

Belongs to the P2X receptor family. Homotrimers. Interacts with LAMA3, ITGB2, ACTB, ACTN4, SVIL, MPP3, HSPA1, HSPCB, HSPA8, PIK230 and PTPRB. Interacts (via C-terminus) with EMP2. Phosphorylation results in its inactivation. Post-translationally, ADP-ribosylation at Arg-125 is necessary and sufficient to activate P2RX7 and gate the channel. In terms of processing, palmitoylation of several cysteines in the C-terminal cytoplasmic tail is required for efficient localization to cell surface. Palmitoylation prevents channel desensitization by physically anchoring the palmitoylated groups to the membrane.

Its subcellular location is the cell membrane. It catalyses the reaction Ca(2+)(in) = Ca(2+)(out). The catalysed reaction is K(+)(in) = K(+)(out). It carries out the reaction Na(+)(in) = Na(+)(out). Activated by high extracellular ATP levels (0.1-2.5 mM). The synthetic analog 2'(3')-O-(4-benzoylbenzoyl)ATP (BzATP) acts as a potent agonist. Does not undergo desensitization, instead, undergoes a facilitation process where currents progressively increase with repetitive or prolonged agonist application. Palmitoylation prevents channel desensitization. The permeability of the P2RX7 channel is modulated by the amount of cholesterol in the plasma membrane. Its function is as follows. ATP-gated nonselective transmembrane cation channel. Requires high millimolar-range concentrations of ATP to become activated. ATP binding trigers the rapid opening of the channel and allows Na(+) and Ca(2+) influx and K(+) efflux. Has also the ability to form a large pore in the cell membrane, allowing the passage of large cationic molecules. In microglia, may mediate NADPH transport across the plasma membrane. In immune cells, P2RX7 acts as a molecular sensor in pathological inflammatory states by detecting and responding to high local concentrations of extracellar ATP. In microglial cells, P2RX7 activation leads to the release of pro-inflammatory cytokines, such as IL-1beta and IL-18, through the activation of the NLRP3 inflammasome and caspase-1. Cooperates with KCNK6 to activate NLRP3 inflammasome. Activates death pathways leading to apoptosis and autophagy. Activates death pathways leading to pyroptosis. In Mus musculus (Mouse), this protein is P2X purinoceptor 7 (P2rx7).